A 296-amino-acid chain; its full sequence is MPELPEVEVVRRGLTPYVLGATITDVAVEHPRSIRTIEGGAAELIGSLQGREVTRIGRRGKFLWFELTGHGDYACGFPQQGLLVHLGMSGQMLIKTQNSALHPHRRIRTTIVRSDAQECFELWFVDQRTFGYWAPTTFVETAHGCVPEQITHIARDLLDPQLKRENLARLIRKKNSEIKRVLLNQEIVSGIGNIYADEMLWAARIHPQTPASHLSVAQLSNLLEHGQRVMNAALDQGGTSFDSLYVNVNGQSGYFDVSLHAYGQQGQACDRCGSNIIREKFANRSSHFCPRCQLMH.

Pro2 (schiff-base intermediate with DNA) is an active-site residue. Glu3 (proton donor) is an active-site residue. Lys61 acts as the Proton donor; for beta-elimination activity in catalysis. DNA contacts are provided by His104, Arg128, and Lys174. The FPG-type zinc finger occupies 260 to 294; sequence HAYGQQGQACDRCGSNIIREKFANRSSHFCPRCQL. Arg284 acts as the Proton donor; for delta-elimination activity in catalysis.

Belongs to the FPG family. In terms of assembly, monomer. The cofactor is Zn(2+).

The catalysed reaction is Hydrolysis of DNA containing ring-opened 7-methylguanine residues, releasing 2,6-diamino-4-hydroxy-5-(N-methyl)formamidopyrimidine.. It carries out the reaction 2'-deoxyribonucleotide-(2'-deoxyribose 5'-phosphate)-2'-deoxyribonucleotide-DNA = a 3'-end 2'-deoxyribonucleotide-(2,3-dehydro-2,3-deoxyribose 5'-phosphate)-DNA + a 5'-end 5'-phospho-2'-deoxyribonucleoside-DNA + H(+). In terms of biological role, involved in base excision repair of DNA damaged by oxidation or by mutagenic agents. Acts as a DNA glycosylase that recognizes and removes damaged bases. Has a preference for oxidized purines, such as 7,8-dihydro-8-oxoguanine (8-oxoG). Has AP (apurinic/apyrimidinic) lyase activity and introduces nicks in the DNA strand. Cleaves the DNA backbone by beta-delta elimination to generate a single-strand break at the site of the removed base with both 3'- and 5'-phosphates. The chain is Formamidopyrimidine-DNA glycosylase from Corynebacterium diphtheriae (strain ATCC 700971 / NCTC 13129 / Biotype gravis).